A 959-amino-acid polypeptide reads, in one-letter code: Translation initiation factor IF-2 (959 aa).

Positions 1 to 10 are enriched in basic and acidic residues; sequence MSDKTNDDKT. The segment at 1–374 is disordered; the sequence is MSDKTNDDKT…SQMQETREKI (374 aa). A compositionally biased stretch (polar residues) spans 27 to 37; sequence EQSTVRQNFSH. Composition is skewed to low complexity over residues 63–118 and 128–138; these read AAAA…VTKP and QRPGGQQAQRP. Composition is skewed to basic and acidic residues over residues 154-225 and 232-241; these read SEMD…EAAK and ARSERRDDAR. Over residues 246 to 284 the composition is skewed to low complexity; the sequence is GARPQQAGRPQGGRPQPAGRPQQGSPRPAPIIADAAPIA. A compositionally biased stretch (basic and acidic residues) spans 318 to 333; that stretch reads PEVRAPKVVKGEDDRR. The 170-residue stretch at 457-626 folds into the tr-type G domain; the sequence is SRPPVVTIMG…LLQAEMLDLK (170 aa). The G1 stretch occupies residues 466-473; sequence GHVDHGKT. 466–473 lines the GTP pocket; sequence GHVDHGKT. Residues 491–495 are G2; the sequence is GITQH. The interval 512 to 515 is G3; it reads DTPG. GTP contacts are provided by residues 512 to 516 and 566 to 569; these read DTPGH and NKID. A G4 region spans residues 566-569; that stretch reads NKID. The segment at 602–604 is G5; it reads SAK.

It belongs to the TRAFAC class translation factor GTPase superfamily. Classic translation factor GTPase family. IF-2 subfamily.

The protein localises to the cytoplasm. Functionally, one of the essential components for the initiation of protein synthesis. Protects formylmethionyl-tRNA from spontaneous hydrolysis and promotes its binding to the 30S ribosomal subunits. Also involved in the hydrolysis of GTP during the formation of the 70S ribosomal complex. The sequence is that of Translation initiation factor IF-2 from Brucella melitensis biotype 1 (strain ATCC 23456 / CCUG 17765 / NCTC 10094 / 16M).